The following is a 185-amino-acid chain: Ribosome-recycling factor (185 aa).

Belongs to the RRF family.

It is found in the cytoplasm. In terms of biological role, responsible for the release of ribosomes from messenger RNA at the termination of protein biosynthesis. May increase the efficiency of translation by recycling ribosomes from one round of translation to another. This Streptococcus pyogenes serotype M28 (strain MGAS6180) protein is Ribosome-recycling factor.